The chain runs to 124 residues: UPF0102 protein Noca_3248 (124 aa).

Belongs to the UPF0102 family.

The chain is UPF0102 protein Noca_3248 from Nocardioides sp. (strain ATCC BAA-499 / JS614).